The following is a 132-amino-acid chain: Small ribosomal subunit protein uS8c (132 aa).

This sequence belongs to the universal ribosomal protein uS8 family. In terms of assembly, part of the 30S ribosomal subunit.

It is found in the plastid. Its subcellular location is the chloroplast. In terms of biological role, one of the primary rRNA binding proteins, it binds directly to 16S rRNA central domain where it helps coordinate assembly of the platform of the 30S subunit. The protein is Small ribosomal subunit protein uS8c (rps8) of Huperzia lucidula (Shining clubmoss).